A 735-amino-acid polypeptide reads, in one-letter code: DNA replication licensing factor mcm5 (735 aa).

Residues 332-538 (IYETVAKSIA…RDMTLAKHVM (207 aa)) form the MCM domain. Residue Arg-372 coordinates ADP. An Arginine finger motif is present at residues 513 to 516 (SRFD).

Belongs to the MCM family. In terms of assembly, component of the mcm2-7 complex (RLF-M). The complex forms a toroidal hexameric ring with the proposed subunit order mcm2-mcm6-mcm4-mcm7-mcm3-mcm5. The heterodimer of mmcm3/mcm5 interacts with mcm4, mmcm6, mcm7 and weakly with mcm2. Component of the CMG helicase complex, composed of the mcm2-7 complex, the GINS complex and cdc45.

The protein resides in the nucleus. The protein localises to the chromosome. The catalysed reaction is ATP + H2O = ADP + phosphate + H(+). Acts as a component of the MCM2-7 complex (MCM complex) which is the replicative helicase essential for 'once per cell cycle' DNA replication initiation and elongation in eukaryotic cells. Core component of CDC45-MCM-GINS (CMG) helicase, the molecular machine that unwinds template DNA during replication, and around which the replisome is built. The active ATPase sites in the MCM2-7 ring are formed through the interaction surfaces of two neighboring subunits such that a critical structure of a conserved arginine finger motif is provided in trans relative to the ATP-binding site of the Walker A box of the adjacent subunit. The six ATPase active sites, however, are likely to contribute differentially to the complex helicase activity. This Xenopus tropicalis (Western clawed frog) protein is DNA replication licensing factor mcm5.